A 428-amino-acid polypeptide reads, in one-letter code: 3-phosphoshikimate 1-carboxyvinyltransferase (428 aa).

The 3-phosphoshikimate site is built by lysine 23, serine 24, and arginine 28. Lysine 23 contributes to the phosphoenolpyruvate binding site. Phosphoenolpyruvate is bound by residues glycine 97 and arginine 125. The 3-phosphoshikimate site is built by serine 170, serine 171, glutamine 172, serine 198, aspartate 314, asparagine 337, and lysine 341. Glutamine 172 contacts phosphoenolpyruvate. Aspartate 314 (proton acceptor) is an active-site residue. Phosphoenolpyruvate-binding residues include arginine 345, arginine 387, and lysine 412.

The protein belongs to the EPSP synthase family. In terms of assembly, monomer.

It localises to the cytoplasm. The catalysed reaction is 3-phosphoshikimate + phosphoenolpyruvate = 5-O-(1-carboxyvinyl)-3-phosphoshikimate + phosphate. The protein operates within metabolic intermediate biosynthesis; chorismate biosynthesis; chorismate from D-erythrose 4-phosphate and phosphoenolpyruvate: step 6/7. Catalyzes the transfer of the enolpyruvyl moiety of phosphoenolpyruvate (PEP) to the 5-hydroxyl of shikimate-3-phosphate (S3P) to produce enolpyruvyl shikimate-3-phosphate and inorganic phosphate. This chain is 3-phosphoshikimate 1-carboxyvinyltransferase, found in Buchnera aphidicola subsp. Schizaphis graminum (strain Sg).